Reading from the N-terminus, the 274-residue chain is 3-methyl-2-oxobutanoate hydroxymethyltransferase (274 aa).

Mg(2+)-binding residues include Asp49 and Asp88. 3-methyl-2-oxobutanoate-binding positions include 49–50 (DS), Asp88, and Lys118. Glu120 is a Mg(2+) binding site. Glu187 serves as the catalytic Proton acceptor.

Belongs to the PanB family. In terms of assembly, homodecamer; pentamer of dimers. Mg(2+) serves as cofactor.

Its subcellular location is the cytoplasm. The enzyme catalyses 3-methyl-2-oxobutanoate + (6R)-5,10-methylene-5,6,7,8-tetrahydrofolate + H2O = 2-dehydropantoate + (6S)-5,6,7,8-tetrahydrofolate. It participates in cofactor biosynthesis; (R)-pantothenate biosynthesis; (R)-pantoate from 3-methyl-2-oxobutanoate: step 1/2. Its function is as follows. Catalyzes the reversible reaction in which hydroxymethyl group from 5,10-methylenetetrahydrofolate is transferred onto alpha-ketoisovalerate to form ketopantoate. In Rhodopseudomonas palustris (strain BisB18), this protein is 3-methyl-2-oxobutanoate hydroxymethyltransferase.